Consider the following 63-residue polypeptide: Large ribosomal subunit protein uL29 (63 aa).

It belongs to the universal ribosomal protein uL29 family.

This is Large ribosomal subunit protein uL29 from Christiangramia forsetii (strain DSM 17595 / CGMCC 1.15422 / KT0803) (Gramella forsetii).